Reading from the N-terminus, the 293-residue chain is MSPRAIVLKEPNGVNLVPHEGIFDISPVAGWKPLLPTDQVFGIFVVFIVLLTLFLVYWIKLRKADPLRNHSSFVLLMQMLFVWAQDTTADLIGEENKKFTPYFLMLLLYLVSSNLIGLLGGISPPTSSLTFTFSLGLATFLGIVIMGIRYQRWSFFKSFTFNITIKGKKYSTLIPNPLSFLGEFAPLFSISLRLWGNILGGTLILALFYNFWFFAFSTLSNKPLALSLGAIFAGILTPALHVYFDVVVGTLQGYVFVMLTYNYWAKMRNIGLEESQEAAQRLQNLEVAKEIIN.

A run of 8 helical transmembrane segments spans residues 39–59 (QVFGIFVVFIVLLTLFLVYWI), 73–93 (FVLLMQMLFVWAQDTTADLIG), 102–122 (YFLMLLLYLVSSNLIGLLGGI), 128–148 (SLTFTFSLGLATFLGIVIMGI), 172–192 (TLIPNPLSFLGEFAPLFSISL), 198–218 (ILGGTLILALFYNFWFFAFST), 224–244 (LALSLGAIFAGILTPALHVYF), and 245–265 (DVVVGTLQGYVFVMLTYNYWA).

Belongs to the ATPase A chain family. F-type ATPases have 2 components, CF(1) - the catalytic core - and CF(0) - the membrane proton channel. CF(1) has five subunits: alpha(3), beta(3), gamma(1), delta(1), epsilon(1). CF(0) has three main subunits: a(1), b(2) and c(9-12). The alpha and beta chains form an alternating ring which encloses part of the gamma chain. CF(1) is attached to CF(0) by a central stalk formed by the gamma and epsilon chains, while a peripheral stalk is formed by the delta and b chains.

The protein localises to the cell membrane. Its function is as follows. Key component of the proton channel; it plays a direct role in the translocation of protons across the membrane. This is ATP synthase subunit a from Mycoplasma pneumoniae (strain ATCC 29342 / M129 / Subtype 1) (Mycoplasmoides pneumoniae).